We begin with the raw amino-acid sequence, 274 residues long: Mitogen-activated protein kinase 4 (274 aa).

ATP contacts are provided by residues 1–8 (GCGGNGLV) and lysine 23. The Protein kinase domain occupies 1–274 (GCGGNGLVLS…KILTFSPMDR (274 aa)). The active-site Proton acceptor is the aspartate 123. The residue at position 160 (serine 160) is a Phosphoserine. The SEG motif motif lies at 160–162 (SEG).

Belongs to the protein kinase superfamily. CMGC Ser/Thr protein kinase family. MAP kinase subfamily. Homodimer. Heterodimer with ERK3/MAPK6. Interacts with MAPKAPK5. The cofactor is Mg(2+). In terms of processing, phosphorylated by PAK1, PAK2 and PAK3 in the activation loop resulting in catalytic activation. Phosphorylated by MAPKAPK5 at other sites. In terms of tissue distribution, exclusively detected in the brain, where expression is restricted to the choroid plexus and hippocampus, and to a lesser extent in lung.

The protein resides in the cytoplasm. It localises to the nucleus. It carries out the reaction L-seryl-[protein] + ATP = O-phospho-L-seryl-[protein] + ADP + H(+). The catalysed reaction is L-threonyl-[protein] + ATP = O-phospho-L-threonyl-[protein] + ADP + H(+). Activated by phosphorylation in the activation loop. Atypical MAPK protein. Phosphorylates microtubule-associated protein 2 (MAP2) and MAPKAPK5. The precise role of the complex formed with MAPKAPK5 is still unclear, but the complex follows a complex set of phosphorylation events: upon interaction with atypical MAPKAPK5, ERK4/MAPK4 is phosphorylated and then mediates phosphorylation and activation of MAPKAPK5, which in turn phosphorylates ERK4/MAPK4. May promote entry in the cell cycle. The polypeptide is Mitogen-activated protein kinase 4 (Mapk4) (Rattus norvegicus (Rat)).